The primary structure comprises 712 residues: MKFFVSCAKGLEYLLADELSALGLGKATATIAGVNAEGELEQALRIVMWSRLASRVLWPIDEFECPDEQALYDGVRALPWHEHIKPEMTLAVDAHVSGDKITHARFAAQRIKDAIVDRMRDEGLERPSVNTDLPDVRVNLSLRKGRASLSIDLGGGPLHRRGWRGAAHEAPLKENLAAALLLRAQWPRLHAAGGGLLDPMCGSGTLLIEGALMAADVAPGLMRHGSLPPSRWLGFDKSAWKTIQSEARDREAAGLAALKPVIHGSDIDPTAIQAARENAEVAGVAHAIRFTRADVADLAAPEQEIGAVVCNPPYDERLAADPALYRALGNALQKAVPQWRASLLCGNDELAFATGLRAGKKYQMFNGALECALIVCDPIAVPGRDPAQPRELSEGAQMVANRLRKNLKKFKSWRAREDITCFRAYDADLPEYAAAIDVYEEDGGKRRTFLHVQEYAAPAAIPENDVRRRRNELLAAAREVFGVPPEQVSMKSRERGKGGSKYGRFEQRDEFIVVRENNALLQVNLFDYLDTGLFLDHRPLRRMMAEQVRGKRFLNLFCYTGVASVQAAVAGAASTTSVDLSATYLQWCYDNLALNGQGGNQHLLVQADAMAWLEGDRGQYDVIFCDPPTFSNSARADDFDVQREQLKLLRAAVARLAPGGVLYFSNNFRRFKLEENAIAEFAQCREITARTIGPDFERNARIHRAWELKRLG.

One can recognise a THUMP domain in the interval 42–153 (QALRIVMWSR…KGRASLSIDL (112 aa)).

This sequence belongs to the methyltransferase superfamily. RlmKL family.

It localises to the cytoplasm. It carries out the reaction guanosine(2445) in 23S rRNA + S-adenosyl-L-methionine = N(2)-methylguanosine(2445) in 23S rRNA + S-adenosyl-L-homocysteine + H(+). The enzyme catalyses guanosine(2069) in 23S rRNA + S-adenosyl-L-methionine = N(2)-methylguanosine(2069) in 23S rRNA + S-adenosyl-L-homocysteine + H(+). In terms of biological role, specifically methylates the guanine in position 2445 (m2G2445) and the guanine in position 2069 (m7G2069) of 23S rRNA. This Stenotrophomonas maltophilia (strain K279a) protein is Ribosomal RNA large subunit methyltransferase K/L.